The chain runs to 335 residues: Glyceraldehyde-3-phosphate dehydrogenase 2 (335 aa).

Residues 12–13 (RI), aspartate 35, arginine 79, and serine 121 contribute to the NAD(+) site. D-glyceraldehyde 3-phosphate contacts are provided by residues 152–154 (SCT) and threonine 183. Cysteine 153 serves as the catalytic Nucleophile. Residue asparagine 184 participates in NAD(+) binding. D-glyceraldehyde 3-phosphate contacts are provided by residues arginine 198, 211 to 212 (TG), and arginine 234. Asparagine 316 lines the NAD(+) pocket.

It belongs to the glyceraldehyde-3-phosphate dehydrogenase family. As to quaternary structure, homotetramer.

The protein resides in the cytoplasm. The catalysed reaction is D-glyceraldehyde 3-phosphate + phosphate + NAD(+) = (2R)-3-phospho-glyceroyl phosphate + NADH + H(+). Its pathway is carbohydrate degradation; glycolysis; pyruvate from D-glyceraldehyde 3-phosphate: step 1/5. Inhibited by pentalenolactone. Functionally, catalyzes the oxidative phosphorylation of glyceraldehyde 3-phosphate (G3P) to 1,3-bisphosphoglycerate (BPG) using the cofactor NAD. The first reaction step involves the formation of a hemiacetal intermediate between G3P and a cysteine residue, and this hemiacetal intermediate is then oxidized to a thioester, with concomitant reduction of NAD to NADH. The reduced NADH is then exchanged with the second NAD, and the thioester is attacked by a nucleophilic inorganic phosphate to produce BPG. The chain is Glyceraldehyde-3-phosphate dehydrogenase 2 (gap2) from Streptomyces avermitilis (strain ATCC 31267 / DSM 46492 / JCM 5070 / NBRC 14893 / NCIMB 12804 / NRRL 8165 / MA-4680).